We begin with the raw amino-acid sequence, 374 residues long: Queuine tRNA-ribosyltransferase (374 aa).

Catalysis depends on aspartate 89, which acts as the Proton acceptor. Substrate-binding positions include 89-93, aspartate 143, glutamine 187, and glycine 214; that span reads DSGGF. The tract at residues 245-251 is RNA binding; the sequence is GVGKPED. Aspartate 264 functions as the Nucleophile in the catalytic mechanism. The interval 269–273 is RNA binding; important for wobble base 34 recognition; it reads TRNAR. Positions 302, 304, 307, and 333 each coordinate Zn(2+).

Belongs to the queuine tRNA-ribosyltransferase family. As to quaternary structure, homodimer. Within each dimer, one monomer is responsible for RNA recognition and catalysis, while the other monomer binds to the replacement base PreQ1. It depends on Zn(2+) as a cofactor.

It carries out the reaction 7-aminomethyl-7-carbaguanine + guanosine(34) in tRNA = 7-aminomethyl-7-carbaguanosine(34) in tRNA + guanine. It functions in the pathway tRNA modification; tRNA-queuosine biosynthesis. In terms of biological role, catalyzes the base-exchange of a guanine (G) residue with the queuine precursor 7-aminomethyl-7-deazaguanine (PreQ1) at position 34 (anticodon wobble position) in tRNAs with GU(N) anticodons (tRNA-Asp, -Asn, -His and -Tyr). Catalysis occurs through a double-displacement mechanism. The nucleophile active site attacks the C1' of nucleotide 34 to detach the guanine base from the RNA, forming a covalent enzyme-RNA intermediate. The proton acceptor active site deprotonates the incoming PreQ1, allowing a nucleophilic attack on the C1' of the ribose to form the product. After dissociation, two additional enzymatic reactions on the tRNA convert PreQ1 to queuine (Q), resulting in the hypermodified nucleoside queuosine (7-(((4,5-cis-dihydroxy-2-cyclopenten-1-yl)amino)methyl)-7-deazaguanosine). This chain is Queuine tRNA-ribosyltransferase, found in Serratia proteamaculans (strain 568).